Consider the following 179-residue polypeptide: Peptide deformylase (179 aa).

Residues C102 and H144 each coordinate Fe cation. The active site involves E145. H148 contributes to the Fe cation binding site.

It belongs to the polypeptide deformylase family. The cofactor is Fe(2+).

The enzyme catalyses N-terminal N-formyl-L-methionyl-[peptide] + H2O = N-terminal L-methionyl-[peptide] + formate. Functionally, removes the formyl group from the N-terminal Met of newly synthesized proteins. Requires at least a dipeptide for an efficient rate of reaction. N-terminal L-methionine is a prerequisite for activity but the enzyme has broad specificity at other positions. In Wolbachia sp. subsp. Brugia malayi (strain TRS), this protein is Peptide deformylase.